The chain runs to 924 residues: 104 kDa microneme/rhoptry antigen (924 aa).

The first 19 residues, M1 to A19, serve as a signal peptide directing secretion. The segment at S490–Y907 is disordered. Composition is skewed to basic and acidic residues over residues P522–K532 and G573–K588. The span at P592–P617 shows a compositional bias: low complexity. The segment covering S653–K673 has biased composition (basic and acidic residues). Residues S724–P736 show a composition bias toward low complexity. 3 stretches are compositionally biased toward basic and acidic residues: residues E737–P747, K770–S783, and D816–S825. Residues D857–E867 show a composition bias toward acidic residues. The span at T868 to E878 shows a compositional bias: basic and acidic residues. Positions V879–K901 are enriched in basic residues. D904 carries GPI-anchor amidated aspartate lipidation. Positions S905–L924 are cleaved as a propeptide — removed in mature form.

It localises to the cell membrane. The sequence is that of 104 kDa microneme/rhoptry antigen from Theileria parva (East coast fever infection agent).